A 248-amino-acid polypeptide reads, in one-letter code: Triosephosphate isomerase (248 aa).

Residue 9 to 11 (NWK) coordinates substrate. Residue H94 is the Electrophile of the active site. The Proton acceptor role is filled by E166. Substrate-binding positions include G172, S212, and 233–234 (GG).

This sequence belongs to the triosephosphate isomerase family. In terms of assembly, homodimer.

The protein localises to the cytoplasm. The enzyme catalyses D-glyceraldehyde 3-phosphate = dihydroxyacetone phosphate. Its pathway is carbohydrate biosynthesis; gluconeogenesis. The protein operates within carbohydrate degradation; glycolysis; D-glyceraldehyde 3-phosphate from glycerone phosphate: step 1/1. In terms of biological role, involved in the gluconeogenesis. Catalyzes stereospecifically the conversion of dihydroxyacetone phosphate (DHAP) to D-glyceraldehyde-3-phosphate (G3P). The protein is Triosephosphate isomerase of Caldanaerobacter subterraneus subsp. tengcongensis (strain DSM 15242 / JCM 11007 / NBRC 100824 / MB4) (Thermoanaerobacter tengcongensis).